The primary structure comprises 206 residues: Pyrrolidone-carboxylate peptidase (206 aa).

Residues E78, C141, and H165 contribute to the active site.

Belongs to the peptidase C15 family. In terms of assembly, homotetramer.

It localises to the cytoplasm. The catalysed reaction is Release of an N-terminal pyroglutamyl group from a polypeptide, the second amino acid generally not being Pro.. Its function is as follows. Removes 5-oxoproline from various penultimate amino acid residues except L-proline. This chain is Pyrrolidone-carboxylate peptidase, found in Thermococcus kodakarensis (strain ATCC BAA-918 / JCM 12380 / KOD1) (Pyrococcus kodakaraensis (strain KOD1)).